The sequence spans 137 residues: Ribosomal RNA large subunit methyltransferase H (137 aa).

S-adenosyl-L-methionine is bound by residues Leu-56, Gly-85, and 104–109; that span reads LSPLTL.

It belongs to the RNA methyltransferase RlmH family. As to quaternary structure, homodimer.

The protein resides in the cytoplasm. The catalysed reaction is pseudouridine(1915) in 23S rRNA + S-adenosyl-L-methionine = N(3)-methylpseudouridine(1915) in 23S rRNA + S-adenosyl-L-homocysteine + H(+). Functionally, specifically methylates the pseudouridine at position 1915 (m3Psi1915) in 23S rRNA. This chain is Ribosomal RNA large subunit methyltransferase H, found in Thermus thermophilus (strain ATCC BAA-163 / DSM 7039 / HB27).